The primary structure comprises 438 residues: Glutamyl-tRNA reductase (438 aa).

Substrate contacts are provided by residues 55–58 (TCNR), Ser118, 123–125 (ETQ), and Gln129. The Nucleophile role is filled by Cys56. Position 198 to 203 (198 to 203 (GAGDMI)) interacts with NADP(+).

It belongs to the glutamyl-tRNA reductase family. As to quaternary structure, homodimer.

The catalysed reaction is (S)-4-amino-5-oxopentanoate + tRNA(Glu) + NADP(+) = L-glutamyl-tRNA(Glu) + NADPH + H(+). It participates in porphyrin-containing compound metabolism; protoporphyrin-IX biosynthesis; 5-aminolevulinate from L-glutamyl-tRNA(Glu): step 1/2. Its function is as follows. Catalyzes the NADPH-dependent reduction of glutamyl-tRNA(Glu) to glutamate 1-semialdehyde (GSA). The polypeptide is Glutamyl-tRNA reductase (Polynucleobacter asymbioticus (strain DSM 18221 / CIP 109841 / QLW-P1DMWA-1) (Polynucleobacter necessarius subsp. asymbioticus)).